The primary structure comprises 105 residues: Replication restart protein PriB (105 aa).

The SSB domain maps to 1 to 102 (MTTNRLVLSG…LHAEQIEFID (102 aa)).

This sequence belongs to the PriB family. In terms of assembly, homodimer. Interacts with PriA and DnaT. Component of the replication restart primosome. Primosome assembly occurs via a 'hand-off' mechanism. PriA binds to replication forks, subsequently PriB then DnaT bind; DnaT then displaces ssDNA to generate the helicase loading substrate.

Its function is as follows. Involved in the restart of stalled replication forks, which reloads the replicative helicase on sites other than the origin of replication; the PriA-PriB pathway is the major replication restart pathway. During primosome assembly it facilitates complex formation between PriA and DnaT on DNA; stabilizes PriA on DNA. Stimulates the DNA unwinding activity of PriA helicase. This Yersinia pseudotuberculosis serotype O:1b (strain IP 31758) protein is Replication restart protein PriB.